Consider the following 285-residue polypeptide: Secreted LysM effector slp2 (285 aa).

The N-terminal stretch at 1–16 (MLPITVVTLFAALAAA) is a signal peptide. The disordered stretch occupies residues 75–143 (GDAAKAGDAA…KGGDAAKGGN (69 aa)). A compositionally biased stretch (basic and acidic residues) spans 85-116 (KGGDAKGGDAKGGDAKGGDAKGGKGGDAKGGK). Positions 117-139 (GGDAAKGGKGGDAAKGGKGGDAA) are enriched in gly residues. LysM domains are found at residues 157-201 (VEHK…VLKI) and 237-281 (FTRV…TINL).

The protein belongs to the secreted LysM effector family.

Might have a role in sequestration of chitin oligosaccharides (breakdown products of fungal cell walls that are released during invasion and act as triggers of host immunity) to dampen host defense. The sequence is that of Secreted LysM effector slp2 from Pyricularia oryzae (strain 70-15 / ATCC MYA-4617 / FGSC 8958) (Rice blast fungus).